The following is a 2346-amino-acid chain: MGEPSSLAKPLELNQHSRFIIGSVSEDNSEDEISNLVKLDLLEEKEGSLSPASVSSDTLSDLGISSLQDGLALHMRSSMSGLHLVKQGRDRKKIDSQRDFTVASPAEFVTRFGGNKVIEKVLIANNGIAAVKCMRSIRRWSYEMFRNERAIRFVVMVTPEDLKANAEYIKMADHYVPVPGGPNNNNYANVELILDIARRIPVQAVWAGWGHASENPKLPELLLKNGIAFMGPPSQAMWALGDKIASSIVAQTAGIPTLPWSGSGLCVDWHENDFSKRILNVPQELYEKGYVKDVDDGLKAAEEVGYPVMIKASEGGGGKGIRKVNNADDFPNLFRQVQAEVPGSPIFVMRLAKQSRHLEVQILADQYGNAISLFGRDCSVQRRHQKIIEEAPAAIATPAVFEHMEQCAVKLARMVGYVSAGTVEYLYSQDGSFYFLELNPRLQVEHPCTEMVADVNLPAAQLQIAMGIPLYRIKDIRMMYGVSPWGDAPIDFENSAHVPCPRGHVIAARITSENPDEGFKPSSGTVQELNFRSNKNVWGYFSVAAAGGLHEFADSQFGHCFSWGENREEAISNMVVALKELSIRGDFRTTVEYLIKLLETESFQLNRIDTGWLDRLIAEKVQAERPDTMLGVVCGALHVADVSLRNSISNFLHSLERGQVLSAHTLLNTVDVELIYEGEKIVLKVTRQSPNSYVVIMNGSCVEVDVHRLSDGGLLLSYDGSSYTTYMKEEVDRYRITIGNKTCVFEKENDPSVLRSPSAGKLIQYIVEDGGHVFAGQCYAEIEVMKMVMTLTAAESGCIHYVKRPGAALDPGCVIAKMQLDNPSKVQQAELHTGSLPRIQSTALRGEKLHRVFHYVLDNLVNVMNGYCLPDPFFSSRVKDWVEGLMKTLRDPSLPLLELQDIMTSVSGRIPPNVEKSIKKEMAQYASNITSVLCQFPSQQIANILDSHAATLNRKSEREVFFMNTQSIVQLVQRYRSGIRGHMKAVVMDLLRQYLRVETQFQNGHYDKCVFALREENKSDMNTVLNYIFSHAQVTKKNLLVTMLIDQLCGRDPTLTDELLNILTELTQLSKTTNAKVALRARQVLIASHLPSYELRHNQVESIFLSAIDMYGHQFCIENLQKLILSETSIFDVLPNFFYHSNQVVRMAALEVYVRRAYIAYELNSVQHRQLKDNTCVVEFQFMLPTSHPNRGNIPTLNRMSFSSNLNHYGMTHVASVSDVLLDNAFTPPCQRMGGMVSFRTFEDFVRIFDEVMGCFCDSPPQSPTFPEAGHTSLYDEDKVPRDEPIHILNVAIKTDCDIEDDSLAAMFREFTQQNKATLVEHGIRRLTFLVAQKDFRKQVNYEVDQRFHREFPKFFTFRARDKFEEDRIYRHLEPALAFQLELNRMRNFDLTAIPCANHKMHLYLGAAKVEVGTEVTDYRFFVRAIIRHSDLVTKEASFEYLQNEGERLLLEAMDELEVAFNNTNVRTDCNHIFLNFVPTVIMDPSKIEESVRSMVMRYGSRLWKLRVLQAELKINIRLTPTGKAIPIRLFLTNESGYYLDISLYKEVTDSRTAQIMFQAYGDKQGPLHGMLINTPYVTKDLLQSKRFQAQSLGTTYIYDIPEMFRQSLIKLWESMSSQAFLPPPPLPSDILTYTELVLDDQGQLVHMNRLPGGNEIGMVAWKMTLKSPEYPDGRDIIVIGNDITYRIGSFGPQEDLLFLRASELARAEGIPRIYVAANSGARIGLAEEIRHMFHVAWVDPEDPYKGYKYLYLTPQDYKRVSALNSVHCEHVEDEGESRYKITDIIGKEEGLGAENLRGSGMIAGESSLAYDEIITISLVTCRAIGIGAYLVRLGQRTIQVENSHLILTGAGALNKVLGREVYTSNNQLGGIQIMHNNGVTHSTVCDDFEGVFTVLHWLSYMPKSVYSSVPLLNSKDPIDRVIEFVPTKAPYDPRWMLAGRPHPTQKGQWLSGFFDYGSFSEIMQPWAQTVVVGRARLGGIPVGVVAVETRTVELSIPADPANLDSEAKIIQQAGQVWFPDSAFKTYQAIKDFNREGLPLMVFANWRGFSGGMKDMYDQVLKFGAYIVDGLRECSQPVMVYIPPQAELRGGSWVVIDPTINPRHMEMYADRESRGSVLEPEGTVEIKFRRKDLVKTMRRVDPVYIHLAERLGTPELSARERKELESKLKEREEFLLPIYHQVAVQFADLHDTPGRMQEKGVINDILDWKTSRTFFYWRLRRLLLEDLVKKKIHNANPELTDGQIQAMLRRWFVEVEGTVKAYVWDNNKDLVEWLEKQLTEEDGVRSVIEENIKYISRDYVLKQIRSLVQANPEVAMDSIVHMTQHISPTQRAEVVRILSTMDSPST.

At methionine 1 the chain carries N-acetylmethionine. Residues serine 5, serine 23, serine 25, serine 29, serine 34, serine 48, serine 50, and serine 53 each carry the phosphoserine modification. Residue threonine 58 is modified to Phosphothreonine. Serine 78 carries the post-translational modification Phosphoserine. Position 80 is a phosphoserine; by AMPK (serine 80). Residues 117 to 618 enclose the Biotin carboxylation domain; it reads VIEKVLIANN…DTGWLDRLIA (502 aa). Residues 275–466 form the ATP-grasp domain; the sequence is SKRILNVPQE…LPAAQLQIAM (192 aa). 315–320 is an ATP binding site; that stretch reads GGGGKG. Mg(2+)-binding residues include glutamate 424, glutamate 437, and asparagine 439. Mn(2+) contacts are provided by glutamate 424, glutamate 437, and asparagine 439. The active site involves arginine 441. Phosphothreonine is present on threonine 610. Residues 745-819 form the Biotinyl-binding domain; that stretch reads FEKENDPSVL…DPGCVIAKMQ (75 aa). Lysine 786 is subject to N6-biotinyllysine. A phosphoserine mark is found at serine 835, serine 1201, serine 1216, and serine 1218. Threonine 1227 carries the phosphothreonine modification. Serine 1259, serine 1263, and serine 1273 each carry phosphoserine. Position 1334 is an N6-acetyllysine (lysine 1334). The CoA carboxyltransferase N-terminal domain occupies 1576-1914; sequence PYVTKDLLQS…SVYSSVPLLN (339 aa). The interval 1576-2234 is carboxyltransferase; that stretch reads PYVTKDLLQS…EDLVKKKIHN (659 aa). Arginine 1823, lysine 2127, and arginine 2129 together coordinate CoA. In terms of domain architecture, CoA carboxyltransferase C-terminal spans 1918–2234; it reads PIDRVIEFVP…EDLVKKKIHN (317 aa). Threonine 2153 carries the phosphothreonine modification.

Monomer, homodimer, and homotetramer. Can form filamentous polymers. Interacts in its inactive phosphorylated form with the BRCT domains of BRCA1 which prevents ACACA dephosphorylation and inhibits lipid synthesis. Interacts with MID1IP1; interaction with MID1IP1 promotes oligomerization and increases its activity. It depends on Mg(2+) as a cofactor. The cofactor is Mn(2+). Biotin is required as a cofactor. Post-translationally, phosphorylation on Ser-1263 is required for interaction with BRCA1. In terms of processing, phosphorylation at Ser-80 by AMPK inactivates enzyme activity. The biotin cofactor is covalently attached to the central biotinyl-binding domain and is required for the catalytic activity. In terms of tissue distribution, expressed at high levels in mammary gland.

It localises to the cytoplasm. Its subcellular location is the cytosol. The enzyme catalyses hydrogencarbonate + acetyl-CoA + ATP = malonyl-CoA + ADP + phosphate + H(+). Its pathway is lipid metabolism; malonyl-CoA biosynthesis; malonyl-CoA from acetyl-CoA: step 1/1. Its activity is regulated as follows. Inhibited by phosphorylation. Citrate promotes oligomerization of the protein into filaments that correspond to the most active form of the carboxylase. Functionally, cytosolic enzyme that catalyzes the carboxylation of acetyl-CoA to malonyl-CoA, the first and rate-limiting step of de novo fatty acid biosynthesis. This is a 2 steps reaction starting with the ATP-dependent carboxylation of the biotin carried by the biotin carboxyl carrier (BCC) domain followed by the transfer of the carboxyl group from carboxylated biotin to acetyl-CoA. This chain is Acetyl-CoA carboxylase 1, found in Ovis aries (Sheep).